Consider the following 222-residue polypeptide: Millepora cytotoxin-1 (222 aa).

Positions 1–20 (MVTLYLHVPILLLVVITARA) are cleaved as a signal peptide. Residues 21-75 (APKPDTHNPFDELSSVAEKQDLHYGDRSRKDPFIAQNDVGNNFRDGTQENLTKVR) constitute a propeptide that is removed on maturation. 3 disulfide bridges follow: Cys89-Cys115, Cys142-Cys168, and Cys179-Cys222. 3 repeats span residues 100-109 (SIHDNHYEDR), 153-162 (SIHDNYYEDR), and 206-215 (SQHNNYYEDR).

This sequence belongs to the dermatopontin family. Is not glycosylated.

It localises to the secreted. The protein localises to the nematocyst. Is potently cytotoxic (EC(50) value 79 ng/mL) towards L1210 mouse leukemia cells, has hemagglutination activity on sheep erythrocytes, and is lethal in crayfish. Has no phospholipase A2 activity. This chain is Millepora cytotoxin-1, found in Millepora dichotoma (Net fire coral).